The primary structure comprises 306 residues: Palmitoyl-protein thioesterase ABHD10, mitochondrial (306 aa).

A mitochondrion-targeting transit peptide spans 1–52 (MAGVGLAAVPAWVPCRRWGLAAVTFGFHHGLSTLLARKTERAPQWLRACRHK). The AB hydrolase-1 domain maps to 78–177 (IIFIPGYISN…KVVALVGVAT (100 aa)). Catalysis depends on charge relay system residues S152, D249, and H279.

It belongs to the AB hydrolase superfamily.

It localises to the mitochondrion. The enzyme catalyses S-hexadecanoyl-L-cysteinyl-[protein] + H2O = L-cysteinyl-[protein] + hexadecanoate + H(+). It carries out the reaction mycophenolic acid O-acyl-beta-D-glucuronide + H2O = mycophenolate + D-glucuronate + H(+). With respect to regulation, inhibited by palmostatin-B. Acts as an acyl-protein thioesterase that hydrolyzes fatty acids from acylated residues in proteins. Regulates the mitochondrial S-depalmitoylation of the nucleophilic active site residue of peroxiredoxin-5/PRDX5, a key antioxidant protein, therefore modulating mitochondrial antioxidant ability. Also catalyzes the deglucuronidation of mycophenolic acid acyl-glucuronide, an active metabolite of the immunosuppressant drug mycophenolate. This chain is Palmitoyl-protein thioesterase ABHD10, mitochondrial (ABHD10), found in Bos taurus (Bovine).